Reading from the N-terminus, the 726-residue chain is MQKKNLITAALPYVNNIPHLGNLVQVLSADAFARYSRMMGIETLYVCGTDEYGTATETKALIEKTTPEELCNKYHAIHKSIYEWFNIKFDIFGRTTNKYHKETVQDLFLKLDKNGYITEKENEQFFCQQDQMFLADRYVTGECPNCGNNTKGDQCENCSNLLVTNELLNPRCIICKNIPIIKKTKHLYIDLPKIKNELEHWIQQIDQNTNWNINAIKITNAFLRDGLKERTITRDLKWGIPVPKKEYENKVFYVWFDAPIGYISITKEIIKDWESWWKNNEDTNLIQFIGKDNILFHTIMFPSIELGSQENWTMLNKLASSEYLNYENLKFSKSAGTGIFGNDVITTEIPSDVWRFYIYYNRPEKADFQFMWDDFMERINSELIGNFSNLINRVLTFYKKFFGDKIDKIELNENFWQIVNIKYERTINFFKQIELKAALKEILDISRIGNKIFQDKEPWKTKNSTPQTTKELLLNLIYLIRDLSILISPFMPHTSDRIRSFFGKSYEISNKFLGTNLGLTTIQSTEVLFTKLEKQLIDSLKLKYSGRTNMQDEKNKNSINLFSEQICLKTVKIKTIDRNPDAEKLFILKLDDGTPEGKQIVSSIADHYTEEELIGKHIIIVDNLKPAKFRGIRSEGMLIATKDENKNFKIIIVEDFKDNPIPGERVILESDTGKELKSPTKISIDKFLQAQIVAENGELKINGINLILEHSKEKVLSKEIPNGKIY.

Positions 12–22 match the 'HIGH' region motif; the sequence is PYVNNIPHLGN. 4 residues coordinate Zn(2+): C143, C146, C155, and C158. The 'KMSKS' region motif lies at 330-334; the sequence is KFSKS. K333 contacts ATP. In terms of domain architecture, tRNA-binding spans 562–667; it reads FSEQICLKTV…DNPIPGERVI (106 aa).

The protein belongs to the class-I aminoacyl-tRNA synthetase family. MetG type 1 subfamily. As to quaternary structure, homodimer. Requires Zn(2+) as cofactor.

The protein localises to the cytoplasm. The catalysed reaction is tRNA(Met) + L-methionine + ATP = L-methionyl-tRNA(Met) + AMP + diphosphate. Functionally, is required not only for elongation of protein synthesis but also for the initiation of all mRNA translation through initiator tRNA(fMet) aminoacylation. The protein is Methionine--tRNA ligase of Borrelia recurrentis (strain A1).